A 237-amino-acid polypeptide reads, in one-letter code: DNA replication inhibitor toxin SocB (237 aa).

Interacts with cognate antitoxin SocA and with beta sliding clamp (dnaN). Degraded by ClpXP, recognition of SocB by ClpX requires SocA.

The protein resides in the cytoplasm. Functionally, toxic component of an atypical type II toxin-antitoxin (TA) system. Upon overexpression in the absence of its cognate antitoxin SocA, leads to inhibition of colony formation, cellular filamentation, incomplete DNA replication and induction of the SOS response. Exercises toxicity by binding the beta sliding clamp (dnaN), blocking DNA replication and leading to premature replication fork collapse and incomplete cell division. Unlike most type II TA systems, the SocB toxin is unstable and targeted by its cognate antitoxin SocA for degradation by ClpXP. Not toxic upon expression in E.coli. The polypeptide is DNA replication inhibitor toxin SocB (Caulobacter vibrioides (strain NA1000 / CB15N) (Caulobacter crescentus)).